Reading from the N-terminus, the 180-residue chain is Vacuolar ATPase assembly protein VMA22 (180 aa).

Positions 16 to 37 (QLLGDLEELEGKRTVLNARVEE) form a coiled coil. The segment covering 92-101 (EEVGPREAGL) has biased composition (basic and acidic residues). Positions 92-122 (EEVGPREAGLRRRKGPTKTPEPESSEAPQDP) are disordered. Residues 153 to 176 (SLQNRIDWGRSQLRGLQEKLKQLE) are a coiled coil.

In terms of assembly, accessory component of the multisubunit proton-transporting vacuolar (V)-ATPase protein pump. As to expression, expressed throughout the brain.

It is found in the endosome. It localises to the lysosome. The protein localises to the endoplasmic reticulum-Golgi intermediate compartment. Its subcellular location is the cytoplasmic vesicle. The protein resides in the COPI-coated vesicle. It is found in the endoplasmic reticulum. In terms of biological role, accessory component of the proton-transporting vacuolar (V)-ATPase protein pump involved in intracellular iron homeostasis. In aerobic conditions, required for intracellular iron homeostasis, thus triggering the activity of Fe(2+) prolyl hydroxylase (PHD) enzymes, and leading to HIF1A hydroxylation and subsequent proteasomal degradation. Necessary for endolysosomal acidification and lysosomal degradation. May be involved in Golgi homeostasis. This is Vacuolar ATPase assembly protein VMA22 from Homo sapiens (Human).